The primary structure comprises 273 residues: Shikimate dehydrogenase (NADP(+)) (273 aa).

Shikimate-binding positions include 14–16 (SKS) and Thr-61. The active-site Proton acceptor is Lys-65. Asp-77 serves as a coordination point for NADP(+). Residues Asn-86 and Asp-102 each contribute to the shikimate site. NADP(+) contacts are provided by residues 126 to 130 (GAGGA), 150 to 155 (NRTYEK), and Met-213. A shikimate-binding site is contributed by Tyr-215. Residue Gly-237 coordinates NADP(+).

Belongs to the shikimate dehydrogenase family. In terms of assembly, homodimer.

It carries out the reaction shikimate + NADP(+) = 3-dehydroshikimate + NADPH + H(+). Its pathway is metabolic intermediate biosynthesis; chorismate biosynthesis; chorismate from D-erythrose 4-phosphate and phosphoenolpyruvate: step 4/7. Involved in the biosynthesis of the chorismate, which leads to the biosynthesis of aromatic amino acids. Catalyzes the reversible NADPH linked reduction of 3-dehydroshikimate (DHSA) to yield shikimate (SA). The protein is Shikimate dehydrogenase (NADP(+)) of Aliivibrio salmonicida (strain LFI1238) (Vibrio salmonicida (strain LFI1238)).